The sequence spans 236 residues: Endonuclease V (236 aa).

Residues Asp-47 and Asp-115 each contribute to the Mg(2+) site.

Belongs to the endonuclease V family. Mg(2+) is required as a cofactor.

Its subcellular location is the cytoplasm. The enzyme catalyses Endonucleolytic cleavage at apurinic or apyrimidinic sites to products with a 5'-phosphate.. DNA repair enzyme involved in the repair of deaminated bases. Selectively cleaves double-stranded DNA at the second phosphodiester bond 3' to a deoxyinosine leaving behind the intact lesion on the nicked DNA. This chain is Endonuclease V, found in Xanthomonas campestris pv. campestris (strain B100).